The chain runs to 304 residues: Ornithine carbamoyltransferase (304 aa).

Residues 53–56 (STRT), Gln-80, Arg-104, and 131–134 (HPCQ) contribute to the carbamoyl phosphate site. L-ornithine is bound by residues Asn-162, Asp-219, and 223 to 224 (SM). Carbamoyl phosphate-binding positions include 259–260 (CL) and Arg-287.

The protein belongs to the aspartate/ornithine carbamoyltransferase superfamily. OTCase family.

It is found in the cytoplasm. The enzyme catalyses carbamoyl phosphate + L-ornithine = L-citrulline + phosphate + H(+). Its pathway is amino-acid biosynthesis; L-arginine biosynthesis; L-arginine from L-ornithine and carbamoyl phosphate: step 1/3. Its function is as follows. Reversibly catalyzes the transfer of the carbamoyl group from carbamoyl phosphate (CP) to the N(epsilon) atom of ornithine (ORN) to produce L-citrulline. This is Ornithine carbamoyltransferase from Herminiimonas arsenicoxydans.